A 461-amino-acid chain; its full sequence is Homocitrate synthase (461 aa).

The Pyruvate carboxyltransferase domain occupies 4-259; that stretch reads VGILDSTLRE…IEVVKLDKLQ (256 aa). Arginine 12 contributes to the 2-oxoglutarate binding site. A Mg(2+)-binding site is contributed by glutamate 13. Histidine 76, arginine 136, and threonine 170 together coordinate 2-oxoglutarate. Mg(2+) contacts are provided by histidine 198 and histidine 200. The Proton acceptor role is filled by histidine 292.

This sequence belongs to the alpha-IPM synthase/homocitrate synthase family. Homocitrate synthase LYS20/LYS21 subfamily. Mg(2+) serves as cofactor. Requires Mn(2+) as cofactor.

The catalysed reaction is acetyl-CoA + 2-oxoglutarate + H2O = (2R)-homocitrate + CoA + H(+). It functions in the pathway amino-acid biosynthesis; L-lysine biosynthesis via AAA pathway; L-alpha-aminoadipate from 2-oxoglutarate: step 1/5. In terms of biological role, catalyzes the aldol-type condensation of 2-oxoglutarate with acetyl-CoA to yield homocitrate. Carries out the first step of the alpha-aminoadipate (AAA) lysine biosynthesis pathway. The protein is Homocitrate synthase of Saccharolobus solfataricus (strain ATCC 35092 / DSM 1617 / JCM 11322 / P2) (Sulfolobus solfataricus).